Here is a 41-residue protein sequence, read N- to C-terminus: Phospholipase A2 homolog nigroviriditoxin acidic subunit A (41 aa).

This sequence belongs to the phospholipase A2 family. Group II subfamily. D49 sub-subfamily. In terms of assembly, nigroviriditoxin is a heterodimer of an acidic subunit A and a basic subunit B. Expressed by the venom gland.

It is found in the secreted. Heterodimer A-B: Nigroviriditoxin possesses phospholipase A2 (PLA2) activity. It consists of a non-covalent association of a basic PLA2 subunit B with a non-enzymatic subunit A. In terms of biological role, subunit A: The acidic subunit of nigroviriditoxin probably is a heterotrimer of three disulfide-linked chains generated by post-translational maturation of a PLA2-like precursor. It appears to have no PLA2 activity of its own, instead inhibiting the catalytic activity of subunit B. It is not toxic to mice by itself but increases toxicity of subunit B. The chain is Phospholipase A2 homolog nigroviriditoxin acidic subunit A from Bothriechis nigroviridis (Black-speckled palm pit viper).